Reading from the N-terminus, the 125-residue chain is Secretion system apparatus protein SsaO (125 aa).

The sequence is that of Secretion system apparatus protein SsaO (ssaO) from Salmonella typhimurium (strain LT2 / SGSC1412 / ATCC 700720).